The sequence spans 310 residues: tRNA dimethylallyltransferase (310 aa).

13-20 (GPTASGKT) is a binding site for ATP. 15–20 (TASGKT) provides a ligand contact to substrate. 4 interaction with substrate tRNA regions span residues 38–41 (DSAL), 162–166 (QRLSR), 243–248 (RCVGYR), and 276–283 (KRQITWLR).

The protein belongs to the IPP transferase family. Monomer. Mg(2+) serves as cofactor.

It catalyses the reaction adenosine(37) in tRNA + dimethylallyl diphosphate = N(6)-dimethylallyladenosine(37) in tRNA + diphosphate. Its function is as follows. Catalyzes the transfer of a dimethylallyl group onto the adenine at position 37 in tRNAs that read codons beginning with uridine, leading to the formation of N6-(dimethylallyl)adenosine (i(6)A). This chain is tRNA dimethylallyltransferase, found in Vibrio parahaemolyticus serotype O3:K6 (strain RIMD 2210633).